The sequence spans 362 residues: Cytochrome P450 monooxygenase-like protein avaN (362 aa).

Residues 3–23 (VILAIFIAAAGCLFSSWRIYW) traverse the membrane as a helical segment.

Belongs to the cytochrome P450 family.

Its subcellular location is the membrane. It functions in the pathway secondary metabolite biosynthesis. Functionally, cytochrome P450 monooxygenase-like protein; part of the cluster that mediates the biosynthesis of a highly modified cyclo-arginine-tryptophan dipeptide (cRW). The first step of the pathway is perfornmed by the arginine-containing cyclodipeptide synthase (RCPDS) avaA that acts as the scaffold-generating enzyme and is responsible for formation of the cyclo-Arg-Trp (cRW) diketopiperazine. AvaB then acts as a multifunctional flavoenzyme that is responsible for generating the cyclo-Arg-formylkynurenine DKP, which can be deformylated by avaC. AvaB then further catalyzes an additional N-oxidation followed by cyclization and dehydration. The next step is an N-acetylation of the guanidine group catalyzed by the arginine N-acetyltransferase avaD. The roles of the additional enzymes identified within the ava cluster still have to be determined. In Aspergillus versicolor, this protein is Cytochrome P450 monooxygenase-like protein avaN.